The following is a 442-amino-acid chain: tRNA modification GTPase MnmE (442 aa).

(6S)-5-formyl-5,6,7,8-tetrahydrofolate contacts are provided by Arg-21, Glu-79, and Lys-118. The TrmE-type G domain maps to 215-365 (GLKIAIVGKP…LENKLSSYCN (151 aa)). Residues 225 to 230 (NVGKSS), 244 to 250 (TNEAGTT), and 269 to 272 (DTAG) each bind GTP. Mg(2+) contacts are provided by Ser-229 and Thr-250. A (6S)-5-formyl-5,6,7,8-tetrahydrofolate-binding site is contributed by Lys-442.

The protein belongs to the TRAFAC class TrmE-Era-EngA-EngB-Septin-like GTPase superfamily. TrmE GTPase family. As to quaternary structure, homodimer. Heterotetramer of two MnmE and two MnmG subunits. It depends on K(+) as a cofactor.

It is found in the cytoplasm. Functionally, exhibits a very high intrinsic GTPase hydrolysis rate. Involved in the addition of a carboxymethylaminomethyl (cmnm) group at the wobble position (U34) of certain tRNAs, forming tRNA-cmnm(5)s(2)U34. In Mycoplasma mobile (strain ATCC 43663 / 163K / NCTC 11711) (Mesomycoplasma mobile), this protein is tRNA modification GTPase MnmE.